The primary structure comprises 104 residues: Iron-sulfur cluster assembly protein CyaY (104 aa).

The protein belongs to the frataxin family.

Its function is as follows. Involved in iron-sulfur (Fe-S) cluster assembly. May act as a regulator of Fe-S biogenesis. The chain is Iron-sulfur cluster assembly protein CyaY from Tolumonas auensis (strain DSM 9187 / NBRC 110442 / TA 4).